The sequence spans 222 residues: Superoxide dismutase [Mn], mitochondrial (222 aa).

Residues 1 to 24 (MLSRAVCGTGRQLAPALGYLGSRQ) constitute a mitochondrion transit peptide. H50 serves as a coordination point for Mn(2+). At Y58 the chain carries 3'-nitrotyrosine. K68 and K75 each carry N6-acetyllysine; alternate. N6-succinyllysine; alternate occurs at positions 68 and 75. H98 serves as a coordination point for Mn(2+). K114 is modified (N6-acetyllysine). N6-acetyllysine; alternate occurs at positions 122 and 130. Residues K122 and K130 each carry the N6-succinyllysine; alternate modification. D183 and H187 together coordinate Mn(2+). K202 carries the post-translational modification N6-acetyllysine.

It belongs to the iron/manganese superoxide dismutase family. In terms of assembly, homotetramer. Requires Mn(2+) as cofactor. In terms of processing, nitrated under oxidative stress. Nitration coupled with oxidation inhibits the catalytic activity. Post-translationally, acetylation at Lys-122 decreases enzymatic activity. Deacetylated by SIRT3 upon exposure to ionizing radiations or after long fasting. Polyubiquitinated; leading to proteasomal degradation. Deubiquitinated by USP36 which increases protein stability.

It is found in the mitochondrion matrix. The catalysed reaction is 2 superoxide + 2 H(+) = H2O2 + O2. Its function is as follows. Destroys superoxide anion radicals which are normally produced within the cells and which are toxic to biological systems. In Macaca fascicularis (Crab-eating macaque), this protein is Superoxide dismutase [Mn], mitochondrial (SOD2).